The following is a 70-amino-acid chain: UPF0352 protein PSHAa1818 (70 aa).

It belongs to the UPF0352 family.

The sequence is that of UPF0352 protein PSHAa1818 from Pseudoalteromonas translucida (strain TAC 125).